We begin with the raw amino-acid sequence, 469 residues long: NADH-quinone oxidoreductase subunit N (469 aa).

14 helical membrane-spanning segments follow: residues 2 to 22 (IALL…FLCV), 28 to 48 (RYSI…FFIV), 70 to 90 (FSFC…ISSF), 101 to 121 (EMFA…LSVE), 122 to 142 (LILT…MIAM), 157 to 177 (FLLS…VFGV), 194 to 214 (FLSI…IAIF), 233 to 253 (GFLA…LCFL), 261 to 281 (ILQG…NLLS), 290 to 310 (ILIA…SSVG), 315 to 335 (IYPA…LFAI), 361 to 381 (AFAF…VGFL), 398 to 418 (LAIF…KIII), and 447 to 467 (ILFI…LNLF).

This sequence belongs to the complex I subunit 2 family. NDH-1 is composed of 14 different subunits. Subunits NuoA, H, J, K, L, M, N constitute the membrane sector of the complex.

The protein localises to the cell inner membrane. The catalysed reaction is a quinone + NADH + 5 H(+)(in) = a quinol + NAD(+) + 4 H(+)(out). NDH-1 shuttles electrons from NADH, via FMN and iron-sulfur (Fe-S) centers, to quinones in the respiratory chain. The immediate electron acceptor for the enzyme in this species is believed to be ubiquinone. Couples the redox reaction to proton translocation (for every two electrons transferred, four hydrogen ions are translocated across the cytoplasmic membrane), and thus conserves the redox energy in a proton gradient. This chain is NADH-quinone oxidoreductase subunit N, found in Campylobacter fetus subsp. fetus (strain 82-40).